Consider the following 254-residue polypeptide: 5-oxoprolinase subunit A (254 aa).

It belongs to the LamB/PxpA family. In terms of assembly, forms a complex composed of PxpA, PxpB and PxpC.

The catalysed reaction is 5-oxo-L-proline + ATP + 2 H2O = L-glutamate + ADP + phosphate + H(+). In terms of biological role, catalyzes the cleavage of 5-oxoproline to form L-glutamate coupled to the hydrolysis of ATP to ADP and inorganic phosphate. This Gluconobacter oxydans (strain 621H) (Gluconobacter suboxydans) protein is 5-oxoprolinase subunit A.